A 295-amino-acid polypeptide reads, in one-letter code: Bifunctional protein FolD (295 aa).

NADP(+)-binding positions include 175–177 and isoleucine 243; that span reads GVS.

It belongs to the tetrahydrofolate dehydrogenase/cyclohydrolase family. As to quaternary structure, homodimer.

The enzyme catalyses (6R)-5,10-methylene-5,6,7,8-tetrahydrofolate + NADP(+) = (6R)-5,10-methenyltetrahydrofolate + NADPH. The catalysed reaction is (6R)-5,10-methenyltetrahydrofolate + H2O = (6R)-10-formyltetrahydrofolate + H(+). It functions in the pathway one-carbon metabolism; tetrahydrofolate interconversion. Functionally, catalyzes the oxidation of 5,10-methylenetetrahydrofolate to 5,10-methenyltetrahydrofolate and then the hydrolysis of 5,10-methenyltetrahydrofolate to 10-formyltetrahydrofolate. The chain is Bifunctional protein FolD from Xylella fastidiosa (strain 9a5c).